The sequence spans 335 residues: MDVRVGGKYRLGRKIGSGSFGDIYLGTNISTGDEVAIKLESVRSRHPQLIYESKLYKILTGGIGIPTLYWYGIEGDYNVMIIELLGPSLEDLFSICNRKLSLKTVLMLADQMLNRIEFVHSRHFIHRDIKPDNFLIGRGKKMSIVFAIDFGLAKKYRDPRTQSHIPYREGKNLTGTARYASVNTHLGIEQSRRDDLEALGYVLMYFNRGSLPWQGLKATTKKDKYDKIMEKKMSTPIEVLCKQFPFEFITYLNYCRSLRFEDRPDYSYLRRLFKDLFFREGYQYDFIFDWTFLHAERERERQRRSMVNQGAESGNQWRRDASGRDPLGRLPQLEP.

Residues 9–278 (YRLGRKIGSG…LRRLFKDLFF (270 aa)) form the Protein kinase domain. ATP contacts are provided by residues 15–23 (IGSGSFGDI) and Lys38. Asp128 acts as the Proton acceptor in catalysis. The segment at 304–335 (RSMVNQGAESGNQWRRDASGRDPLGRLPQLEP) is disordered. A compositionally biased stretch (polar residues) spans 305–316 (SMVNQGAESGNQ). The span at 317–327 (WRRDASGRDPL) shows a compositional bias: basic and acidic residues.

The protein belongs to the protein kinase superfamily. CK1 Ser/Thr protein kinase family. Casein kinase I subfamily.

The enzyme catalyses L-seryl-[protein] + ATP = O-phospho-L-seryl-[protein] + ADP + H(+). It carries out the reaction L-threonyl-[protein] + ATP = O-phospho-L-threonyl-[protein] + ADP + H(+). In terms of biological role, casein kinases are operationally defined by their preferential utilization of acidic proteins such as caseins as substrates. It can phosphorylate a large number of proteins. The sequence is that of Casein kinase I from Eimeria tenella (Coccidian parasite).